Here is a 294-residue protein sequence, read N- to C-terminus: Cytidine deaminase (294 aa).

CMP/dCMP-type deaminase domains are found at residues 48 to 168 (DDDA…FGPT) and 187 to 294 (AETD…RVTF). 89 to 91 (NME) is a substrate binding site. Zn(2+) is bound at residue histidine 102. The active-site Proton donor is glutamate 104. Residues cysteine 129 and cysteine 132 each contribute to the Zn(2+) site.

The protein belongs to the cytidine and deoxycytidylate deaminase family. In terms of assembly, homodimer. The cofactor is Zn(2+).

It carries out the reaction cytidine + H2O + H(+) = uridine + NH4(+). The catalysed reaction is 2'-deoxycytidine + H2O + H(+) = 2'-deoxyuridine + NH4(+). Its function is as follows. This enzyme scavenges exogenous and endogenous cytidine and 2'-deoxycytidine for UMP synthesis. The sequence is that of Cytidine deaminase from Yersinia pseudotuberculosis serotype IB (strain PB1/+).